A 369-amino-acid polypeptide reads, in one-letter code: tRNA-specific 2-thiouridylase MnmA (369 aa).

Residues 10–17 and Leu36 contribute to the ATP site; that span reads GLSGGVDS. Cys97 (nucleophile) is an active-site residue. Cys97 and Cys196 are joined by a disulfide. Position 122 (Gly122) interacts with ATP. Residues 146–148 form an interaction with tRNA region; it reads KDQ. The active-site Cysteine persulfide intermediate is the Cys196. An interaction with tRNA region spans residues 301–302; the sequence is RY.

It belongs to the MnmA/TRMU family.

Its subcellular location is the cytoplasm. The catalysed reaction is S-sulfanyl-L-cysteinyl-[protein] + uridine(34) in tRNA + AH2 + ATP = 2-thiouridine(34) in tRNA + L-cysteinyl-[protein] + A + AMP + diphosphate + H(+). Functionally, catalyzes the 2-thiolation of uridine at the wobble position (U34) of tRNA, leading to the formation of s(2)U34. This Thermosynechococcus vestitus (strain NIES-2133 / IAM M-273 / BP-1) protein is tRNA-specific 2-thiouridylase MnmA.